A 362-amino-acid polypeptide reads, in one-letter code: MHFLQNAVVAATMGAALAAAAPLEKRSCTFTSASAAKSGKSSCSTITLDNIAVPAGETLDLTGLKKGTTVIFEGETTFGYKEWKGPLISMSGTDITVKQASGAKINCDGARWWDGKGSNGGKTKPKFFQAHKLDQSSITGLKVYNTPVQGFSILADHLTITDVTIDNSAGTSKGHNTDAFDIGQSTYITIDGATVYNQDDCLAINSGEHITFTNGYCDGGHGLSIGSIGGRSDNTVNDVTISNSKVLNSQNGVRIKTIYGKTGTVENVKFEDITLSDISKYGIVVEQDYENGSPTGTPTNGVKVEDITFKKVTGSVKSSGTDIYILCGSGSCSNWTWSGVDVTGGKKSSKCKNVPSGASCSD.

The N-terminal stretch at 1–20 (MHFLQNAVVAATMGAALAAA) is a signal peptide. Residues 21–25 (APLEK) constitute a propeptide that is removed on maturation. An intrachain disulfide couples Cys-28 to Cys-43. 6 PbH1 repeats span residues 155–184 (ADHLTITDVTIDNSAGTSKGHNTDAFDIGQ), 185–206 (STYITIDGATVYNQDDCLAINS), 207–227 (GEHITFTNGYCDGGHGLSIGS), 236–257 (VNDVTISNSKVLNSQNGVRIKT), 265–287 (VENVKFEDITLSDISKYGIVVEQ), and 299–344 (TNGV…DVTG). Asp-199 serves as the catalytic Proton donor. Cys-201 and Cys-217 are oxidised to a cystine. His-221 is a catalytic residue. Cys-327 and Cys-332 are oxidised to a cystine. Asn-334 is a glycosylation site (N-linked (GlcNAc...) asparagine). A disulfide bridge links Cys-351 with Cys-360.

It belongs to the glycosyl hydrolase 28 family.

The protein resides in the secreted. The catalysed reaction is (1,4-alpha-D-galacturonosyl)n+m + H2O = (1,4-alpha-D-galacturonosyl)n + (1,4-alpha-D-galacturonosyl)m.. Functionally, involved in maceration and soft-rotting of plant tissue. Hydrolyzes the 1,4-alpha glycosidic bonds of de-esterified pectate in the smooth region of the plant cell wall. The protein is Probable endopolygalacturonase B (pgaB) of Aspergillus niger (strain ATCC MYA-4892 / CBS 513.88 / FGSC A1513).